The primary structure comprises 916 residues: Probable serine/threonine-protein kinase DDB_G0267514 (916 aa).

3 disordered regions span residues S283–S311, N461–D518, and F550–S646. Composition is skewed to low complexity over residues N461–P493 and F550–N622. Over residues H623 to S646 the composition is skewed to polar residues. Residues L662–P916 enclose the Protein kinase domain. Residues L668 to V676 and K689 contribute to the ATP site. D784 serves as the catalytic Proton acceptor.

It belongs to the protein kinase superfamily. TKL Ser/Thr protein kinase family.

The catalysed reaction is L-seryl-[protein] + ATP = O-phospho-L-seryl-[protein] + ADP + H(+). It catalyses the reaction L-threonyl-[protein] + ATP = O-phospho-L-threonyl-[protein] + ADP + H(+). In Dictyostelium discoideum (Social amoeba), this protein is Probable serine/threonine-protein kinase DDB_G0267514.